The sequence spans 156 residues: Small ribosomal subunit protein uS7 (156 aa).

This sequence belongs to the universal ribosomal protein uS7 family. In terms of assembly, part of the 30S ribosomal subunit. Contacts proteins S9 and S11.

Functionally, one of the primary rRNA binding proteins, it binds directly to 16S rRNA where it nucleates assembly of the head domain of the 30S subunit. Is located at the subunit interface close to the decoding center, probably blocks exit of the E-site tRNA. The polypeptide is Small ribosomal subunit protein uS7 (Dictyoglomus thermophilum (strain ATCC 35947 / DSM 3960 / H-6-12)).